We begin with the raw amino-acid sequence, 239 residues long: MDAVATAYLGGAVALIVGVAFVWLLYRSLDGSPHQSALAPLAIIPVFAGLSYVGMAYDIGTVIVNGNQIVGLRYIDWLVTTPILVGYVGYAAGASRRSIIGVMVADALMIAVGAGAVVTDGTLKWALFGVSSIFHLSLFAYLYVIFPRVVPDVPEQIGLFNLLKNHIGLLWLAYPLVWLFGPAGIGEATAAGVALTYVFLDVLAKVPYVYFFYARRRVFMHSESPPAPEQATVEATAAD.

Residues 1–3 (MDA) are Extracellular-facing. The helical transmembrane segment at 4–25 (VATAYLGGAVALIVGVAFVWLL) threads the bilayer. Topologically, residues 26-34 (YRSLDGSPH) are cytoplasmic. A helical membrane pass occupies residues 35-56 (QSALAPLAIIPVFAGLSYVGMA). The Extracellular segment spans residues 57–70 (YDIGTVIVNGNQIV). Residues 71–92 (GLRYIDWLVTTPILVGYVGYAA) form a helical membrane-spanning segment. At 93–95 (GAS) the chain is on the cytoplasmic side. Residues 96–118 (RRSIIGVMVADALMIAVGAGAVV) traverse the membrane as a helical segment. Residues 119–122 (TDGT) are Extracellular-facing. The helical transmembrane segment at 123-150 (LKWALFGVSSIFHLSLFAYLYVIFPRVV) threads the bilayer. Residues 151 to 153 (PDV) are Cytoplasmic-facing. Residues 154 to 181 (PEQIGLFNLLKNHIGLLWLAYPLVWLFG) form a helical membrane-spanning segment. Over 182–189 (PAGIGEAT) the chain is Extracellular. Residues 190 to 222 (AAGVALTYVFLDVLAKVPYVYFFYARRRVFMHS) form a helical membrane-spanning segment. K205 is modified (N6-(retinylidene)lysine). Residues 223 to 239 (ESPPAPEQATVEATAAD) lie on the Cytoplasmic side of the membrane.

It belongs to the archaeal/bacterial/fungal opsin family. As to quaternary structure, interacts with HTR-I.

It is found in the cell membrane. Its function is as follows. Involved in the control of phototaxis. Mediates both photoattractant (in the orange light) and photophobic (in the near UV light) responses. The signal is then transmitted to the sensory rhodopsin I transducer (HTR-I). The chain is Sensory rhodopsin-1 (sopI) from Halobacterium salinarum (strain ATCC 29341 / DSM 671 / R1).